The chain runs to 274 residues: Cytochrome b-c1 complex subunit Rieske, mitochondrial (274 aa).

Over 79 to 103 the chain is Mitochondrial matrix; it reads SHTDIKVPDFSDYRRPEVLDSTKSS. A helical transmembrane segment spans residues 104–140; sequence KESSEARKGFSYLVTATTTVGVAYAAKNVVSQFVSSM. Topologically, residues 141–274 are mitochondrial intermembrane; it reads SASADVLAMS…FTSDDMVIVG (134 aa). One can recognise a Rieske domain in the interval 187–272; the sequence is EAAVEVSQLR…YEFTSDDMVI (86 aa). 5 residues coordinate [2Fe-2S] cluster: Cys217, His219, Cys236, His239, and Ser241. Residues Cys222 and Cys238 are joined by a disulfide bond.

It belongs to the Rieske iron-sulfur protein family. As to quaternary structure, component of the ubiquinol-cytochrome c oxidoreductase (cytochrome b-c1 complex, complex III, CIII), a multisubunit enzyme composed of 11 subunits. The complex is composed of 3 respiratory subunits cytochrome b, cytochrome c1 and Rieske protein UQCRFS1, 2 core protein subunits UQCRC1/QCR1 and UQCRC2/QCR2, and 6 low-molecular weight protein subunits UQCRH/QCR6, UQCRB/QCR7, UQCRQ/QCR8, UQCR10/QCR9, UQCR11/QCR10 and subunit 9, the cleavage product of Rieske protein UQCRFS1. The complex exists as an obligatory dimer and forms supercomplexes (SCs) in the inner mitochondrial membrane with NADH-ubiquinone oxidoreductase (complex I, CI) and cytochrome c oxidase (complex IV, CIV), resulting in different assemblies (supercomplex SCI(1)III(2)IV(1) and megacomplex MCI(2)III(2)IV(2)). Incorporation of the Rieske protein UQCRFS1 is the penultimate step in complex III assembly. Interacts with TTC19, which is involved in the clearance of UQCRFS1 fragments. Component of the ubiquinol-cytochrome c oxidoreductase (cytochrome b-c1 complex, complex III, CIII). Subunit 9 corresponds to the mitochondrial targeting sequence (MTS) of Rieske protein UQCRFS1. It is retained after processing and incorporated inside complex III, where it remains bound to the complex and localizes between the 2 core subunits UQCRC1/QCR1 and UQCRC2/QCR2. Requires [2Fe-2S] cluster as cofactor. Post-translationally, proteolytic processing is necessary for the correct insertion of UQCRFS1 in the complex III dimer. Several fragments are generated during UQCRFS1 insertion, most probably due to the endogenous matrix-processing peptidase (MPP) activity of the 2 core protein subunits UQCRC1/QCR1 and UQCRC2/QCR2, which are homologous to the 2 mitochondrial-processing peptidase (MPP) subunits beta-MPP and alpha-MPP respectively. The action of the protease is also necessary for the clearance of the UQCRFS1 fragments.

The protein resides in the mitochondrion inner membrane. The catalysed reaction is a quinol + 2 Fe(III)-[cytochrome c](out) = a quinone + 2 Fe(II)-[cytochrome c](out) + 2 H(+)(out). Functionally, component of the ubiquinol-cytochrome c oxidoreductase, a multisubunit transmembrane complex that is part of the mitochondrial electron transport chain which drives oxidative phosphorylation. The respiratory chain contains 3 multisubunit complexes succinate dehydrogenase (complex II, CII), ubiquinol-cytochrome c oxidoreductase (cytochrome b-c1 complex, complex III, CIII) and cytochrome c oxidase (complex IV, CIV), that cooperate to transfer electrons derived from NADH and succinate to molecular oxygen, creating an electrochemical gradient over the inner membrane that drives transmembrane transport and the ATP synthase. The cytochrome b-c1 complex catalyzes electron transfer from ubiquinol to cytochrome c, linking this redox reaction to translocation of protons across the mitochondrial inner membrane, with protons being carried across the membrane as hydrogens on the quinol. In the process called Q cycle, 2 protons are consumed from the matrix, 4 protons are released into the intermembrane space and 2 electrons are passed to cytochrome c. The Rieske protein is a catalytic core subunit containing a [2Fe-2S] iron-sulfur cluster. It cycles between 2 conformational states during catalysis to transfer electrons from the quinol bound in the Q(0) site in cytochrome b to cytochrome c1. Incorporation of UQCRFS1 is the penultimate step in complex III assembly. Component of the ubiquinol-cytochrome c oxidoreductase (cytochrome b-c1 complex, complex III, CIII). UQCRFS1 undergoes proteolytic processing once it is incorporated in the complex III dimer. One of the fragments, called subunit 9, corresponds to its mitochondrial targeting sequence (MTS). The proteolytic processing is necessary for the correct insertion of UQCRFS1 in the complex III dimer, but the persistence of UQCRFS1-derived fragments may prevent newly imported UQCRFS1 to be processed and assembled into complex III and is detrimental for the complex III structure and function. The chain is Cytochrome b-c1 complex subunit Rieske, mitochondrial (UQCRFS1) from Bos taurus (Bovine).